The primary structure comprises 298 residues: Thymidylate synthase (298 aa).

DUMP contacts are provided by residues Arg-25 and 159-160; that span reads RR. The active-site Nucleophile is Cys-179. Residues 200–203, Asn-211, and 241–243 contribute to the dUMP site; these read RSVD and HLY. Asp-203 provides a ligand contact to (6R)-5,10-methylene-5,6,7,8-tetrahydrofolate. (6R)-5,10-methylene-5,6,7,8-tetrahydrofolate is bound at residue Ala-297.

This sequence belongs to the thymidylate synthase family. Bacterial-type ThyA subfamily. As to quaternary structure, homodimer.

It is found in the cytoplasm. The enzyme catalyses dUMP + (6R)-5,10-methylene-5,6,7,8-tetrahydrofolate = 7,8-dihydrofolate + dTMP. It participates in pyrimidine metabolism; dTTP biosynthesis. Functionally, catalyzes the reductive methylation of 2'-deoxyuridine-5'-monophosphate (dUMP) to 2'-deoxythymidine-5'-monophosphate (dTMP) while utilizing 5,10-methylenetetrahydrofolate (mTHF) as the methyl donor and reductant in the reaction, yielding dihydrofolate (DHF) as a by-product. This enzymatic reaction provides an intracellular de novo source of dTMP, an essential precursor for DNA biosynthesis. The protein is Thymidylate synthase of Cereibacter sphaeroides (strain ATCC 17025 / ATH 2.4.3) (Rhodobacter sphaeroides).